Consider the following 96-residue polypeptide: Mitochondrial import inner membrane translocase subunit Tim13-A (96 aa).

The Twin CX3C motif motif lies at 47 to 70 (CFRKCIGKPGGSLDNSEQKCIAMC). Cystine bridges form between cysteine 47-cysteine 70 and cysteine 51-cysteine 66.

The protein belongs to the small Tim family. In terms of assembly, heterohexamer; composed of 3 copies of TIMM8 (TIMM8A or TIMM8B) and 3 copies of TIMM13, named soluble 70 kDa complex. Associates with the TIM22 complex, whose core is composed of TIMM22.

It is found in the mitochondrion inner membrane. Its function is as follows. Mitochondrial intermembrane chaperone that participates in the import and insertion of some multi-pass transmembrane proteins into the mitochondrial inner membrane. Also required for the transfer of beta-barrel precursors from the TOM complex to the sorting and assembly machinery (SAM complex) of the outer membrane. Acts as a chaperone-like protein that protects the hydrophobic precursors from aggregation and guide them through the mitochondrial intermembrane space. The TIMM8-TIMM13 complex mediates the import of some proteins while the predominant TIMM9-TIMM10 70 kDa complex mediates the import of much more proteins. This is Mitochondrial import inner membrane translocase subunit Tim13-A (timm13-a) from Xenopus laevis (African clawed frog).